A 354-amino-acid chain; its full sequence is Uroporphyrinogen decarboxylase (354 aa).

Residues 27 to 31 (RQAGR), D77, Y154, S209, and H327 contribute to the substrate site.

This sequence belongs to the uroporphyrinogen decarboxylase family. Homodimer.

The protein resides in the cytoplasm. The enzyme catalyses uroporphyrinogen III + 4 H(+) = coproporphyrinogen III + 4 CO2. The protein operates within porphyrin-containing compound metabolism; protoporphyrin-IX biosynthesis; coproporphyrinogen-III from 5-aminolevulinate: step 4/4. Functionally, catalyzes the decarboxylation of four acetate groups of uroporphyrinogen-III to yield coproporphyrinogen-III. The polypeptide is Uroporphyrinogen decarboxylase (Shewanella baltica (strain OS185)).